Here is a 488-residue protein sequence, read N- to C-terminus: MKYSDLRDFIAQLESRELLKRIDYPVSPHLEMTVVSDKVLRSGGPALLFTNTPNYNMPVLTNLFGTVERVALGMGEESIVALREIGKLLAALKEPDPPKGFKDAFSKLPLLKQALNMAPKYVSGAECQTHVWEKDEVDLTLLPIQTCWPGDVAPLITWGLVTTRGPHQSRENMGIYRQQLLSKNKLIMRWLSHRGGALDYQAWQQEYPQERFPVAVTLGADPATILAAVTPVPDTLSEYAFAGLLRGQRTRLTRCIGNDLHVPASAEIVLEGYLEPGNEAPEGPYGDHTGYYNEVQSFPVFTVERITHRDKPIYHSTYTGRPPDEPAILGVALNEVFIPLLQKQFPEIVDFYLPPEGCSYRLAVVTIKKQYPGHAKRIMMAVWSFLRQFMYTKFVIVCDDDVDARNWQDVIWAMTTRMDPSRDTVMVENTPIDYLDFASPVSGLGSKMGMDATSKWPGETQREWGKPITMDEDVLNRVNGYWSLLGLK.

Residue asparagine 172 coordinates Mn(2+). Residues 175-177 (IYR), 189-191 (RWL), and 194-195 (RG) each bind prenylated FMN. Glutamate 238 is a binding site for Mn(2+). Aspartate 287 functions as the Proton donor in the catalytic mechanism.

This sequence belongs to the UbiD family. In terms of assembly, homohexamer. Prenylated FMN is required as a cofactor. It depends on Mn(2+) as a cofactor.

The protein resides in the cell membrane. The catalysed reaction is a 4-hydroxy-3-(all-trans-polyprenyl)benzoate + H(+) = a 2-(all-trans-polyprenyl)phenol + CO2. The protein operates within cofactor biosynthesis; ubiquinone biosynthesis. Its function is as follows. Catalyzes the decarboxylation of 3-octaprenyl-4-hydroxy benzoate to 2-octaprenylphenol, an intermediate step in ubiquinone biosynthesis. The chain is 3-octaprenyl-4-hydroxybenzoate carboxy-lyase from Legionella pneumophila (strain Corby).